We begin with the raw amino-acid sequence, 391 residues long: Isochorismate synthase EntC (391 aa).

Residues Thr140, Thr142, Val145, and Asp146 each contribute to the Mg(2+) site. Residue Lys147 is the Proton acceptor of the active site. Catalysis depends on Glu197, which acts as the Proton donor. 6 residues coordinate isochorismate: Gly214, Ser215, Glu241, Ala303, Arg347, and Gly361. Mg(2+) is bound at residue Glu241. Glu376 serves as a coordination point for Mg(2+). Residue Lys380 participates in isochorismate binding.

Belongs to the isochorismate synthase family. In terms of assembly, monomer. Forms a specific pairwise interaction with EntB; this interaction likely facilitates substrate channeling to connect the EntB and EntC active sites. Mg(2+) is required as a cofactor.

The enzyme catalyses chorismate = isochorismate. Its pathway is siderophore biosynthesis; enterobactin biosynthesis. Functionally, involved in the biosynthesis of the siderophore enterobactin (macrocyclic trimeric lactone of N-(2,3-dihydroxybenzoyl)-serine). Catalyzes the reversible conversion of chorismate to isochorismate. The sequence is that of Isochorismate synthase EntC from Escherichia coli O157:H7.